Reading from the N-terminus, the 550-residue chain is FRPDRSHAKSARSVAETMGNYHPHGDASIYDTLVRMAQPWSLRYPLVDGQGNFGSPGNDPPAAMRYCLTGDALVRLPFGQSMRIGDVAPGARTNSDNAGELKVLDRHGDPVFADRLFHSGDHQTFRVQTAEGYEVTGTSNHPVLCLVNLAGVPTLLWMLIEEIRPDDYVVLQRAPPVESGPANWRDAMEALLLGAFISEGFMSESRAGFNNVDRDYFNAVVAAYDAVVGGKRYVAQRTIASGSVLNELDIHDVSALKGTRLGVLCGQRSADKSVPEWLWQSPAAVKRVFLQALFEGDGSCSALPRNTIQVSYSTRSRQLAIDVQQMLLEFGVISRRYRHAVGEYKVVITNRAQAELFATQIGFGGAKQSKLTRILGSLPPCAGMDTNHVPGLAAFIRSHCDSEWVDKEWLRKHNIDRLSRWRRDGAEILSRIANPDVRAIATDLTDGRFYYAQVTSVTEAGVQPVYSLRVDSEDHAFLTNGFVSHNTEARLTPLAMEMLREIDEETVDFIPNYDGRVQEPTVLPSRFPNLLANGSGGIAVGMATNIPPHN.

Residues Phe-1–Asn-550 form the Topo IIA-type catalytic domain. The O-(5'-phospho-DNA)-tyrosine intermediate role is filled by Tyr-66. Residues Leu-192–Val-332 form the DOD-type homing endonuclease domain.

Belongs to the type II topoisomerase GyrA/ParC subunit family. In terms of assembly, heterotetramer, composed of two GyrA and two GyrB chains. In the heterotetramer, GyrA contains the active site tyrosine that forms a transient covalent intermediate with DNA, while GyrB binds cofactors and catalyzes ATP hydrolysis. This protein undergoes a protein self splicing that involves a post-translational excision of the intervening region (intein) followed by peptide ligation.

The protein resides in the cytoplasm. The enzyme catalyses ATP-dependent breakage, passage and rejoining of double-stranded DNA.. Its function is as follows. A type II topoisomerase that negatively supercoils closed circular double-stranded (ds) DNA in an ATP-dependent manner to modulate DNA topology and maintain chromosomes in an underwound state. Negative supercoiling favors strand separation, and DNA replication, transcription, recombination and repair, all of which involve strand separation. Also able to catalyze the interconversion of other topological isomers of dsDNA rings, including catenanes and knotted rings. Type II topoisomerases break and join 2 DNA strands simultaneously in an ATP-dependent manner. This chain is DNA gyrase subunit A (gyrA), found in Mycobacterium gordonae.